A 137-amino-acid polypeptide reads, in one-letter code: Basic phospholipase A2 DsM-S1 (137 aa).

An N-terminal signal peptide occupies residues 1–16 (MRTLWIVAVCLIGVEG). 7 cysteine pairs are disulfide-bonded: C42-C131, C44-C60, C59-C111, C65-C137, C66-C104, C73-C97, and C91-C102. Ca(2+)-binding residues include Y43, G45, and G47. H63 is a catalytic residue. D64 is a Ca(2+) binding site. Residue D105 is part of the active site.

The protein belongs to the phospholipase A2 family. Group II subfamily. D49 sub-subfamily. Ca(2+) serves as cofactor. As to expression, expressed by the venom gland.

It is found in the secreted. It catalyses the reaction a 1,2-diacyl-sn-glycero-3-phosphocholine + H2O = a 1-acyl-sn-glycero-3-phosphocholine + a fatty acid + H(+). Its function is as follows. Snake venom phospholipase A2 (PLA2) that is neurotoxic. PLA2 catalyzes the calcium-dependent hydrolysis of the 2-acyl groups in 3-sn-phosphoglycerides. The sequence is that of Basic phospholipase A2 DsM-S1 from Daboia siamensis (Eastern Russel's viper).